Here is a 261-residue protein sequence, read N- to C-terminus: MSSKPLILVTNDDGVHAKGIRHLWQSIQDLADLIIVAPQQEQSAVSLSITVRRPLHIEKVDWLNAQADVWSVNGTPADCVKLALNVVLPKRPQLIVSGINRGTNAGRNIFYSGTVAAIMEGVMQGIPGIAFSYGDYFNPSYHLIESFIPGIVNYALQNAMQEGTFLNVNFPKTEHGPIKGIRLTTQGKEYWAENPEKRQHPAEQNSYYWLGSKLAEYDEREDSDIFLLRKGFATVVPLHIGDLTNHSHLLKEKLAFETFVN.

4 residues coordinate a divalent metal cation: D12, D13, S43, and N100.

It belongs to the SurE nucleotidase family. It depends on a divalent metal cation as a cofactor.

The protein resides in the cytoplasm. It carries out the reaction a ribonucleoside 5'-phosphate + H2O = a ribonucleoside + phosphate. Its function is as follows. Nucleotidase that shows phosphatase activity on nucleoside 5'-monophosphates. The polypeptide is 5'-nucleotidase SurE (Protochlamydia amoebophila (strain UWE25)).